The chain runs to 273 residues: Dermonecrotic toxin SdSicTox-betaIF1 (273 aa).

H5 is an active-site residue. Mg(2+) contacts are provided by E25 and D27. H41 acts as the Nucleophile in catalysis. Disulfide bonds link C45–C51 and C47–C189.

It belongs to the arthropod phospholipase D family. Class II subfamily. Mg(2+) serves as cofactor. In terms of tissue distribution, expressed by the venom gland.

Its subcellular location is the secreted. It catalyses the reaction an N-(acyl)-sphingosylphosphocholine = an N-(acyl)-sphingosyl-1,3-cyclic phosphate + choline. It carries out the reaction an N-(acyl)-sphingosylphosphoethanolamine = an N-(acyl)-sphingosyl-1,3-cyclic phosphate + ethanolamine. The catalysed reaction is a 1-acyl-sn-glycero-3-phosphocholine = a 1-acyl-sn-glycero-2,3-cyclic phosphate + choline. The enzyme catalyses a 1-acyl-sn-glycero-3-phosphoethanolamine = a 1-acyl-sn-glycero-2,3-cyclic phosphate + ethanolamine. Functionally, dermonecrotic toxins cleave the phosphodiester linkage between the phosphate and headgroup of certain phospholipids (sphingolipid and lysolipid substrates), forming an alcohol (often choline) and a cyclic phosphate. This toxin acts on sphingomyelin (SM). It may also act on ceramide phosphoethanolamine (CPE), lysophosphatidylcholine (LPC) and lysophosphatidylethanolamine (LPE), but not on lysophosphatidylserine (LPS), and lysophosphatidylglycerol (LPG). It acts by transphosphatidylation, releasing exclusively cyclic phosphate products as second products. Induces dermonecrosis, hemolysis, increased vascular permeability, edema, inflammatory response, and platelet aggregation. This Sicarius cf. damarensis (strain GJB-2008) (Six-eyed sand spider) protein is Dermonecrotic toxin SdSicTox-betaIF1.